The primary structure comprises 551 residues: MQEFLLPVIKSALQSAAIETDKPVQIEKPTDKKNGDFSTNIALLLSKECRRNPRELAAELIGQMIFPDGTVERIEIAGPGFINFYLTPLFIMQSVEHILLEGKGYGSSCAGKGKTAIVEYVSANPTGPLTIGRGRGGVLGDCIANLLATQGYGLTREYYFNDAGRQMQILGESVRYRYMERCGRDIVFPESHYQGEYIREIAEILFLEHESSLIDSDNLSIFKDTAEAIIFSSIKKTLARIDIRHDSFFNEHTLYIAEGNGKSANDRVLELLESKGFIDRYDGATWFLTTKLGQEKDKVLVKSSGEPSYRLPDIAYHLDKYRRKFDLIVNVFGADHIDEYPDVLEALRILGHDTSKMRVAINQFVTTTVDGETVKMSTRKGNADLLDELIDDVGADATRLFFIMRSKDSHLNFDIELAKKQSKDNPVFYLQYAHARICSLLRIAAEEAGFKPDGSGAHLLQKLTLEPEIQLGFTLLDYPEVIRTAIRLLEPQKMVEYLHSVAEQYHKFYQECPILKADPDIRTARLFLSLATRQVLRNGFTILGISAPESM.

Residues 123-133 (ANPTGPLTIGR) carry the 'HIGH' region motif.

Belongs to the class-I aminoacyl-tRNA synthetase family. Monomer.

Its subcellular location is the cytoplasm. The enzyme catalyses tRNA(Arg) + L-arginine + ATP = L-arginyl-tRNA(Arg) + AMP + diphosphate. This Chlorobium limicola (strain DSM 245 / NBRC 103803 / 6330) protein is Arginine--tRNA ligase.